The following is a 469-amino-acid chain: Secreted triacylglycerol lipase LIP3 (469 aa).

An N-terminal signal peptide occupies residues 1–21 (MVSLLWKFTLLCLFLLACTSA). A disulfide bridge connects residues cysteine 121 and cysteine 292. Serine 205 serves as the catalytic Nucleophile. Asparagine 238 is a glycosylation site (N-linked (GlcNAc...) asparagine). Catalysis depends on residues aspartate 352 and histidine 386.

Belongs to the AB hydrolase superfamily. Lipase family. Class Lip subfamily.

Its subcellular location is the secreted. The enzyme catalyses a triacylglycerol + H2O = a diacylglycerol + a fatty acid + H(+). It carries out the reaction a monoacylglycerol + H2O = glycerol + a fatty acid + H(+). The catalysed reaction is a diacylglycerol + H2O = a monoacylglycerol + a fatty acid + H(+). Its function is as follows. Secreted lipase that hydrolyzes acylglycerol lipids such as triacylglycerols and consequently releases free fatty acid. Generates free oleic acid from the substrates mono- and diolein and hydrolyzes triolein in significant amounts. Due to an absence of fatty acid synthase genes in Malassezia species, secretory lipases are essential for the yeast to generate free fatty acids from degradation of sebum and assimilate them as lipid sources for growth. Plays an essential role at the pathogen-host interface during disease progression. Performs also the reverse reaction to build diacyl- and triacyl- glycerols from monoacylglycerols. The sequence is that of Secreted triacylglycerol lipase LIP3 from Malassezia restricta (strain ATCC 96810 / NBRC 103918 / CBS 7877) (Seborrheic dermatitis infection agent).